We begin with the raw amino-acid sequence, 228 residues long: Ribose-5-phosphate isomerase A (228 aa).

Residues 32–35, 85–88, and 98–101 contribute to the substrate site; these read TGST, DGAD, and KGGG. E107 acts as the Proton acceptor in catalysis. K125 is a substrate binding site.

It belongs to the ribose 5-phosphate isomerase family. Homodimer.

The enzyme catalyses aldehydo-D-ribose 5-phosphate = D-ribulose 5-phosphate. The protein operates within carbohydrate degradation; pentose phosphate pathway; D-ribose 5-phosphate from D-ribulose 5-phosphate (non-oxidative stage): step 1/1. Its function is as follows. Catalyzes the reversible conversion of ribose-5-phosphate to ribulose 5-phosphate. The chain is Ribose-5-phosphate isomerase A from Cupriavidus pinatubonensis (strain JMP 134 / LMG 1197) (Cupriavidus necator (strain JMP 134)).